The following is a 257-amino-acid chain: Transmembrane protein C257L (257 aa).

2 helical membrane-spanning segments follow: residues 123-143 (LELLGYSPTSLIGGDLMFTAL) and 163-183 (MMIFFLIILLCIILGIFYVLV).

This sequence belongs to the asfivirus C257R family.

The protein resides in the host membrane. Its subcellular location is the virion. The chain is Transmembrane protein C257L from Ornithodoros (relapsing fever ticks).